Consider the following 271-residue polypeptide: Elongation factor Ts (271 aa).

Residues 76 to 79 (TDFV) form an involved in Mg(2+) ion dislocation from EF-Tu region.

The protein belongs to the EF-Ts family.

The protein localises to the cytoplasm. Functionally, associates with the EF-Tu.GDP complex and induces the exchange of GDP to GTP. It remains bound to the aminoacyl-tRNA.EF-Tu.GTP complex up to the GTP hydrolysis stage on the ribosome. This Mycolicibacterium gilvum (strain PYR-GCK) (Mycobacterium gilvum (strain PYR-GCK)) protein is Elongation factor Ts.